Consider the following 242-residue polypeptide: Caffeoyl-CoA O-methyltransferase (242 aa).

Substrate is bound at residue lysine 16. Residues threonine 58, glutamate 80, 82–83 (GV), serine 88, aspartate 106, and alanine 135 contribute to the S-adenosyl-L-methionine site. Residue aspartate 158 participates in substrate binding. Aspartate 158 serves as a coordination point for a divalent metal cation. An S-adenosyl-L-methionine-binding site is contributed by aspartate 160. Residues aspartate 184 and asparagine 185 each coordinate a divalent metal cation. Position 189 (asparagine 189) interacts with substrate.

Belongs to the class I-like SAM-binding methyltransferase superfamily. Cation-dependent O-methyltransferase family. CCoAMT subfamily. The cofactor is a divalent metal cation.

It catalyses the reaction (E)-caffeoyl-CoA + S-adenosyl-L-methionine = (E)-feruloyl-CoA + S-adenosyl-L-homocysteine + H(+). It functions in the pathway aromatic compound metabolism; phenylpropanoid biosynthesis. Functionally, methylates caffeoyl-CoA to feruloyl-CoA and 5-hydroxyferuloyl-CoA to sinapoyl-CoA. Plays a role in the synthesis of feruloylated polysaccharides. Involved in the reinforcement of the plant cell wall. Also involved in the responding to wounding or pathogen challenge by the increased formation of cell wall-bound ferulic acid polymers. The chain is Caffeoyl-CoA O-methyltransferase (CCOAOMT) from Solanum tuberosum (Potato).